The following is a 75-amino-acid chain: UPF0352 protein VF_1649 (75 aa).

Belongs to the UPF0352 family.

The protein is UPF0352 protein VF_1649 of Aliivibrio fischeri (strain ATCC 700601 / ES114) (Vibrio fischeri).